The chain runs to 440 residues: Cytochrome b (440 aa).

A helical membrane pass occupies residues 46 to 66 (IWGIVLAFCLVLQIATGIVLV). His97 and His111 together coordinate heme b. 9 consecutive transmembrane segments (helical) span residues 100–120 (GASL…YYGS), 129–149 (WIVG…GYVL), 156–176 (FWGA…GEAI), 194–214 (FFSL…VHIW), 253–273 (LFAL…MPNY), 296–315 (WYFL…VWVV), 330–350 (FFGV…PWLD), 365–385 (WWFW…AMPA), and 394–414 (LAGS…LGII). Heme b-binding residues include His198 and His212.

This sequence belongs to the cytochrome b family. In terms of assembly, the main subunits of complex b-c1 are: cytochrome b, cytochrome c1 and the Rieske protein. It depends on heme b as a cofactor.

The protein resides in the cell membrane. Its function is as follows. Component of the ubiquinol-cytochrome c reductase complex (complex III or cytochrome b-c1 complex), which is a respiratory chain that generates an electrochemical potential coupled to ATP synthesis. The protein is Cytochrome b (petB) of Paracoccus denitrificans.